The following is a 212-amino-acid chain: ATP phosphoribosyltransferase (212 aa).

This sequence belongs to the ATP phosphoribosyltransferase family. Short subfamily. As to quaternary structure, heteromultimer composed of HisG and HisZ subunits.

Its subcellular location is the cytoplasm. The enzyme catalyses 1-(5-phospho-beta-D-ribosyl)-ATP + diphosphate = 5-phospho-alpha-D-ribose 1-diphosphate + ATP. It participates in amino-acid biosynthesis; L-histidine biosynthesis; L-histidine from 5-phospho-alpha-D-ribose 1-diphosphate: step 1/9. Its function is as follows. Catalyzes the condensation of ATP and 5-phosphoribose 1-diphosphate to form N'-(5'-phosphoribosyl)-ATP (PR-ATP). Has a crucial role in the pathway because the rate of histidine biosynthesis seems to be controlled primarily by regulation of HisG enzymatic activity. The sequence is that of ATP phosphoribosyltransferase from Clostridium novyi (strain NT).